We begin with the raw amino-acid sequence, 325 residues long: ATP phosphoribosyltransferase (325 aa).

The protein belongs to the ATP phosphoribosyltransferase family. Long subfamily. Mg(2+) serves as cofactor.

It is found in the cytoplasm. The enzyme catalyses 1-(5-phospho-beta-D-ribosyl)-ATP + diphosphate = 5-phospho-alpha-D-ribose 1-diphosphate + ATP. Its pathway is amino-acid biosynthesis; L-histidine biosynthesis; L-histidine from 5-phospho-alpha-D-ribose 1-diphosphate: step 1/9. With respect to regulation, feedback inhibited by histidine. Functionally, catalyzes the condensation of ATP and 5-phosphoribose 1-diphosphate to form N'-(5'-phosphoribosyl)-ATP (PR-ATP). Has a crucial role in the pathway because the rate of histidine biosynthesis seems to be controlled primarily by regulation of HisG enzymatic activity. The chain is ATP phosphoribosyltransferase from Nitrobacter hamburgensis (strain DSM 10229 / NCIMB 13809 / X14).